Here is a 514-residue protein sequence, read N- to C-terminus: MAMPRNLPGQAAHDEADQEILRLDGIRKRFPGVLALDGIRLDLRRGEVHAVCGENGAGKSTLMKIISGQYLPDEGAVHYRGAPVRFRSASEAQAAGISIIHQELNLVPHLSVAENLFLAREPRRGPFVDTKRMNAEAARCIARIGLNVAPTTKVGVLSIAQQQMVEIAKALSHDARVLIMDEPTSSLTEAETVQLFRIIEELRADGVAILYISHRLDEMAQIVDRVTVLRDGRHISTDDFADVSIDDIVARMVGRTLDDAYPSRQSVPTDDVLLDVRDLRRDGVFGPVSFALRRGEILGFAGLMGAGRTEIARAIFGADRPDGGTIALHGRPVTIRSPREAIRHGIAYLSEDRKKEGLALPMPVAANLTLANVRGIASRFGFLRFDDEIDVARRYVQDLAIRTPSVHQRVRNLSGGNQQKVVIGKWLYRGSKILFFDEPTRGIDVGAKFAIYGLMDRLAADGVGVVLISSELPELLGMTDRIAVFHEGRMTAILDTKHTSQEEIMHYASGRSHA.

2 consecutive ABC transporter domains span residues 21–256 (LRLD…VGRT) and 267–512 (VPTD…SGRS). Residue 53–60 (GENGAGKS) participates in ATP binding.

Belongs to the ABC transporter superfamily. Carbohydrate importer 2 (CUT2) (TC 3.A.1.2) family.

It is found in the cell inner membrane. It catalyses the reaction D-ribose(out) + ATP + H2O = D-ribose(in) + ADP + phosphate + H(+). The enzyme catalyses D-galactose(out) + ATP + H2O = D-galactose(in) + ADP + phosphate + H(+). Its function is as follows. Part of an ABC transporter complex involved in carbohydrate import. Could be involved in ribose, galactose and/or methyl galactoside import. Responsible for energy coupling to the transport system. This is Putative ribose/galactose/methyl galactoside import ATP-binding protein 3 from Burkholderia cenocepacia (strain HI2424).